The sequence spans 413 residues: Probable protein S-acyltransferase 3 (413 aa).

The next 2 helical transmembrane spans lie at 65 to 85 (LTSF…LVWI) and 96 to 116 (VLAS…LTSA). The DHHC domain occupies 171-221 (KFCDTCLLYRPPRASHCSICNNCVQRFDHHCPWVGQCIARRNYPFFICFIS). Residue cysteine 201 is the S-palmitoyl cysteine intermediate of the active site. Transmembrane regions (helical) follow at residues 216–236 (FICF…FSWI) and 255–275 (SVIL…LTIF). The interval 364–413 (RDSPRKLPLPTRNLDDIKDISDNYDRSTTTREDASDRDPSFFSSQLDLPK) is disordered. Residues 376 to 402 (NLDDIKDISDNYDRSTTTREDASDRDP) show a composition bias toward basic and acidic residues. The span at 404–413 (FFSSQLDLPK) shows a compositional bias: polar residues.

Belongs to the DHHC palmitoyltransferase family. In terms of tissue distribution, expressed in flowers and pollen.

The protein resides in the endoplasmic reticulum membrane. It is found in the cytoplasmic vesicle membrane. It carries out the reaction L-cysteinyl-[protein] + hexadecanoyl-CoA = S-hexadecanoyl-L-cysteinyl-[protein] + CoA. Its function is as follows. Palmitoyl acyltransferase. This Arabidopsis thaliana (Mouse-ear cress) protein is Probable protein S-acyltransferase 3 (PAT03).